The primary structure comprises 178 residues: Protein GrpE (178 aa).

A compositionally biased stretch (basic and acidic residues) spans 1–11 (MAEDQAPREET). The segment at 1–30 (MAEDQAPREETVEAPELTEAPEIDELETLR) is disordered.

It belongs to the GrpE family. As to quaternary structure, homodimer.

It is found in the cytoplasm. Functionally, participates actively in the response to hyperosmotic and heat shock by preventing the aggregation of stress-denatured proteins, in association with DnaK and GrpE. It is the nucleotide exchange factor for DnaK and may function as a thermosensor. Unfolded proteins bind initially to DnaJ; upon interaction with the DnaJ-bound protein, DnaK hydrolyzes its bound ATP, resulting in the formation of a stable complex. GrpE releases ADP from DnaK; ATP binding to DnaK triggers the release of the substrate protein, thus completing the reaction cycle. Several rounds of ATP-dependent interactions between DnaJ, DnaK and GrpE are required for fully efficient folding. In Cereibacter sphaeroides (strain ATCC 17023 / DSM 158 / JCM 6121 / CCUG 31486 / LMG 2827 / NBRC 12203 / NCIMB 8253 / ATH 2.4.1.) (Rhodobacter sphaeroides), this protein is Protein GrpE.